The primary structure comprises 251 residues: 3-deoxy-manno-octulosonate cytidylyltransferase (251 aa).

Belongs to the KdsB family.

The protein localises to the cytoplasm. It catalyses the reaction 3-deoxy-alpha-D-manno-oct-2-ulosonate + CTP = CMP-3-deoxy-beta-D-manno-octulosonate + diphosphate. It functions in the pathway nucleotide-sugar biosynthesis; CMP-3-deoxy-D-manno-octulosonate biosynthesis; CMP-3-deoxy-D-manno-octulosonate from 3-deoxy-D-manno-octulosonate and CTP: step 1/1. The protein operates within bacterial outer membrane biogenesis; lipopolysaccharide biosynthesis. Activates KDO (a required 8-carbon sugar) for incorporation into bacterial lipopolysaccharide in Gram-negative bacteria. This chain is 3-deoxy-manno-octulosonate cytidylyltransferase, found in Brucella canis (strain ATCC 23365 / NCTC 10854 / RM-666).